The primary structure comprises 377 residues: Queuine tRNA-ribosyltransferase (377 aa).

Catalysis depends on Asp89, which acts as the Proton acceptor. Substrate contacts are provided by residues 89-93 (DSGGF), Asp143, Gln188, and Gly215. Residues 246–252 (GVGKPED) form an RNA binding region. Asp265 (nucleophile) is an active-site residue. Residues 270–274 (TRNAR) form an RNA binding; important for wobble base 34 recognition region. Residues Cys303, Cys305, Cys308, and His334 each coordinate Zn(2+).

This sequence belongs to the queuine tRNA-ribosyltransferase family. As to quaternary structure, homodimer. Within each dimer, one monomer is responsible for RNA recognition and catalysis, while the other monomer binds to the replacement base PreQ1. The cofactor is Zn(2+).

The catalysed reaction is 7-aminomethyl-7-carbaguanine + guanosine(34) in tRNA = 7-aminomethyl-7-carbaguanosine(34) in tRNA + guanine. Its pathway is tRNA modification; tRNA-queuosine biosynthesis. Functionally, catalyzes the base-exchange of a guanine (G) residue with the queuine precursor 7-aminomethyl-7-deazaguanine (PreQ1) at position 34 (anticodon wobble position) in tRNAs with GU(N) anticodons (tRNA-Asp, -Asn, -His and -Tyr). Catalysis occurs through a double-displacement mechanism. The nucleophile active site attacks the C1' of nucleotide 34 to detach the guanine base from the RNA, forming a covalent enzyme-RNA intermediate. The proton acceptor active site deprotonates the incoming PreQ1, allowing a nucleophilic attack on the C1' of the ribose to form the product. After dissociation, two additional enzymatic reactions on the tRNA convert PreQ1 to queuine (Q), resulting in the hypermodified nucleoside queuosine (7-(((4,5-cis-dihydroxy-2-cyclopenten-1-yl)amino)methyl)-7-deazaguanosine). The sequence is that of Queuine tRNA-ribosyltransferase from Acinetobacter baumannii (strain AB307-0294).